A 600-amino-acid chain; its full sequence is UvrABC system protein C (600 aa).

The region spanning 15-100 (NSAGVYQYFN…IKQLHPKYNI (86 aa)) is the GIY-YIG domain. In terms of domain architecture, UVR spans 203-238 (SILIKNLEKQMLVLAQNENYEEAAKVRDQIVTIKDL).

It belongs to the UvrC family. As to quaternary structure, interacts with UvrB in an incision complex.

The protein resides in the cytoplasm. Functionally, the UvrABC repair system catalyzes the recognition and processing of DNA lesions. UvrC both incises the 5' and 3' sides of the lesion. The N-terminal half is responsible for the 3' incision and the C-terminal half is responsible for the 5' incision. This Campylobacter jejuni subsp. jejuni serotype O:23/36 (strain 81-176) protein is UvrABC system protein C.